The chain runs to 369 residues: S-(hydroxymethyl)glutathione dehydrogenase (369 aa).

The Zn(2+) site is built by Cys-40, His-62, Cys-92, Cys-95, Cys-98, Cys-106, and Cys-169.

Belongs to the zinc-containing alcohol dehydrogenase family. Class-III subfamily. Homodimer. It depends on Zn(2+) as a cofactor.

The protein resides in the cytoplasm. The enzyme catalyses S-(hydroxymethyl)glutathione + NADP(+) = S-formylglutathione + NADPH + H(+). It catalyses the reaction S-(hydroxymethyl)glutathione + NAD(+) = S-formylglutathione + NADH + H(+). The catalysed reaction is a primary alcohol + NAD(+) = an aldehyde + NADH + H(+). It carries out the reaction a secondary alcohol + NAD(+) = a ketone + NADH + H(+). The enzyme catalyses S-nitrosoglutathione + NADH + H(+) = S-(hydroxysulfenamide)glutathione + NAD(+). Has high formaldehyde dehydrogenase activity in the presence of glutathione and catalyzes the oxidation of normal alcohols in a reaction that is not GSH-dependent. In addition, hemithiolacetals other than those formed from GSH, including omega-thiol fatty acids, also are substrates. Also acts as a S-nitroso-glutathione reductase by catalyzing the NADH-dependent reduction of S-nitrosoglutathione. The chain is S-(hydroxymethyl)glutathione dehydrogenase (frmA) from Escherichia coli (strain SMS-3-5 / SECEC).